The sequence spans 158 residues: Non-secretory ribonuclease (158 aa).

An N-terminal signal peptide occupies residues 1-27 (MVPKLFTSQICVLLLFGLLSVEVSLQV). A C-linked (Man) tryptophan glycan is attached at W34. The active-site Proton acceptor is H42. 4 cysteine pairs are disulfide-bonded: C50-C110, C64-C121, C82-C136, and C89-C98. Y60 bears the 3'-nitrotyrosine mark. Position 65-69 (65-69 (KNQNT)) interacts with substrate. Residues N86, N92, and N111 are each glycosylated (N-linked (GlcNAc...) asparagine). The active-site Proton donor is the H153.

This sequence belongs to the pancreatic ribonuclease family. Interacts with and forms a tight 1:1 complex with RNH1. Dimerization of two such complexes may occur.

It is found in the lysosome. Its subcellular location is the cytoplasmic granule. It carries out the reaction an [RNA] containing cytidine + H2O = an [RNA]-3'-cytidine-3'-phosphate + a 5'-hydroxy-ribonucleotide-3'-[RNA].. It catalyses the reaction an [RNA] containing uridine + H2O = an [RNA]-3'-uridine-3'-phosphate + a 5'-hydroxy-ribonucleotide-3'-[RNA].. This is a non-secretory ribonuclease. It is a pyrimidine specific nuclease with a slight preference for U. Cytotoxin and helminthotoxin. Possesses a wide variety of biological activities. The chain is Non-secretory ribonuclease (RNASE2) from Saguinus oedipus (Cotton-top tamarin).